Reading from the N-terminus, the 679-residue chain is MNNRAHTFLWGIRQFRTSIPRSRALRTYSLVFCKPEVIHSKRNPRNHLLNGFDEGLQPSVRYLFQDIFISKSVAGCTQTRGIIHAAGFKLDRILCPRRLSFDAKHSFVSDGTSDHDLMKTNFHHTSTEDVLTKKMRPTPVNYKKLAQECNSLSDVLDTFSKAPTFPGSNYFLAMWIIAKRISEDKRRFEKQLMFSHPAFNQLCEQMMREAKIMRYDHLLFSLNAIVKLGVPQNSLMVQTLLRTIQERISECDERCLSILSTALVTMEPCMNVNALRAGLRILVDQQVWNINDIFTLQTVMRCIGKDMKALKELGRFSVLNSRHMFEVLAAMDHRSVVLLNECSKIVIDNIHGCPFKVLISILQSCRDLRYQNEDLFKSIADYVATTFDIWKLKHVIFFLLSFETLGFRPPGLMDKLLEKVVQEPGSLTVKNIVSVLHVYSSLNHVHNVQNREFLEALASALTGCLHQISSESLLNAVHSFCMMNYFPLAPINQLIKENIIHELLTSGDTEKNIHKLHVLNTCLKLDESTYKCIHIPLPQLPLTASHPNEKLAEVLSRLLEGDGCFSRNVQLPHNYHIDFEIRMDTNRTQVFSFSEGDASSATNMQRVAVLCVPKSAYCLNSNHLRGLMAMKIRHLNVMGFHVILIHNWELKKLKMEDAVTFVRKKIYSDEALATTDESV.

A phosphoserine mark is found at S113 and S126. One can recognise an RAP domain in the interval 607–664; sequence VAVLCVPKSAYCLNSNHLRGLMAMKIRHLNVMGFHVILIHNWELKKLKMEDAVTFVRK.

The protein belongs to the FAST kinase family. As to quaternary structure, monomer. Found in a complex with GRSF1, DDX28, DHX30 and FASTKD5. Associates with the 16S mitochondrial rRNA (16S mt-rRNA). Forms a regulatory protein-RNA complex, consisting of RCC1L, NGRN, RPUSD3, RPUSD4, TRUB2, FASTKD2 and 16S mt-rRNA.

It localises to the mitochondrion matrix. The protein resides in the mitochondrion nucleoid. Plays an important role in assembly of the mitochondrial large ribosomal subunit. As a component of a functional protein-RNA module, consisting of RCC1L, NGRN, RPUSD3, RPUSD4, TRUB2, FASTKD2 and 16S mitochondrial ribosomal RNA (16S mt-rRNA), controls 16S mt-rRNA abundance and is required for intra-mitochondrial translation. May play a role in mitochondrial apoptosis. The protein is FAST kinase domain-containing protein 2, mitochondrial (Fastkd2) of Rattus norvegicus (Rat).